We begin with the raw amino-acid sequence, 513 residues long: Histone acetyltransferase KAT5 (513 aa).

The Tudor-knot domain occupies 8–65; that stretch reads IEGCRLPVLRRNQDNEDEWPLAEILSVKDISGRKLFYVHYIDFNKRLDEWVTHERLDL. At K52 the chain carries N6-acetyllysine. Positions 69–106 are disordered; sequence QFPKKEAKTPTKNGLPGSRPGSPEREVPASAQASGKTL. S86 is modified (phosphoserine; by GSK3). S90 carries the post-translational modification Phosphoserine; by CDK1 and CDK9. N6-acetyllysine; by autocatalysis occurs at positions 104 and 120. A disordered region spans residues 122–220; the sequence is REAIPGGEPD…RMTGSLVSDR (99 aa). Polar residues predominate over residues 133–144; that stretch reads PLSSSSCLQPNH. N6-acetyllysine; by autocatalysis occurs at positions 148, 150, 187, and 189. S199 is subject to Phosphoserine. The MYST-type HAT domain occupies 227-504; it reads TRMKNIECIE…IDSKCLHFTP (278 aa). A C2HC MYST-type zinc finger spans residues 260 to 285; that stretch reads LYLCEFCLKYGRSLKCLQRHLTKCDL. N6-acetyllysine; by autocatalysis is present on K327. The interval 368 to 513 is interaction with ATF2; it reads ACILTLPPYQ…PKDWSKRGKW (146 aa). Residues 370 to 372 and 377 to 383 each bind acetyl-CoA; these read ILT and QRRGYGK. The active-site Proton donor/acceptor is E403. Acetyl-CoA-binding residues include S407 and S416. K430 is covalently cross-linked (Glycyl lysine isopeptide (Lys-Gly) (interchain with G-Cter in SUMO1); alternate). K430 participates in a covalent cross-link: Glycyl lysine isopeptide (Lys-Gly) (interchain with G-Cter in SUMO2); alternate. K451 participates in a covalent cross-link: Glycyl lysine isopeptide (Lys-Gly) (interchain with G-Cter in SUMO1).

It belongs to the MYST (SAS/MOZ) family. As to quaternary structure, component of the NuA4 histone acetyltransferase complex which contains the catalytic subunit KAT5/TIP60 and the subunits EP400, TRRAP/PAF400, BRD8/SMAP, EPC1, DMAP1/DNMAP1, RUVBL1/TIP49, RUVBL2, ING3, actin, ACTL6A/BAF53A, MORF4L1/MRG15, MORF4L2/MRGX, MRGBP, YEATS4/GAS41, VPS72/YL1 and MEAF6. KAT5/TIP60, EPC1, and ING3 together constitute a minimal HAT complex termed Piccolo NuA4. The NuA4 complex interacts with MYC. Interacts with ATM. Interacts with JADE1. Interacts with PLA2G4A/CPLA2, EDNRA and HDAC7. Interacts with the cytoplasmic tail of APP and APBB1/FE65. Interacts with TRIM24 and TRIM68. Forms a complex with SENP6 and UBE2I in response to UV irradiation. Identified in a complex with HINT1. Interacts with ATF2 and CUL3. Interacts with NR1D2 (via N-terminus). Component of a SWR1-like complex. Interacts with FOXP3. Interacts with ZBTB49. Interacts with SRF. Interacts with ATF3; promoting autoacetylation and deubiquitination by USP7. Interacts with EP300/p300; interaction promotes KAT5 autoacetylation. Interacts with PRKDC; interaction is impaired following KAT5 sumoylation. Interacts with GPR50. Interacts with NME3; this interaction enables recruitment of NME3 at DNA damage sites where it plays a role in the repair of DNA. In terms of assembly, (Microbial infection) Interacts with HIV-1 TAT. In terms of processing, phosphorylated on Ser-86 and Ser-90; enhanced during G2/M phase. The phosphorylated form has a higher activity. Phosphorylation at Ser-90 by CDK1 or CDK9 is a prerequisite for phosphorylation at Ser-86 by GSK3. Phosphorylation at Ser-86 by GSK3 (GSK3A or GSK3B) activates acetyltransferase and acyltransferase activities. Phosphorylation at Ser-90 by CDK9 promotes KAT5 recruitment to chromatin. Phosphorylation by VRK1 following DNA damage promotes KAT5 association with chromatin and histone acetyltransferase activity. Autoacetylated. Autoacetylation is required for histone acetyltransferase activity. Autoacetylation at Lys-327 is facilitated by interaction with EP300/p300: it prevents ubiquitination and subsequent degradation by the proteasome and promotes acetylation of target proteins. Deacetylated by HDAC3 and SIRT1. Deacetylation by HDAC3 promotes its ubiquitination and cytoplasmic localization. Post-translationally, sumoylated by UBE2I at Lys-430 and Lys-451, leading to increase of its histone acetyltransferase activity in UV-induced DNA damage response, as well as its translocation to nuclear bodies. Sumoylation with SUMO2 by PIAS4 at Lys-430 promotes repair of DNA double-strand breaks (DSBs) via homologous recombination (HR). Sumoylation by PIAS4 impairs interaction with PRKDC, inhibiting non-homologous end joining (NHEJ)-mediated repair of DSBs, thereby facilitating HR. Desumoylated by SENP3. In terms of processing, ubiquitinated by MDM2, leading to its proteasome-dependent degradation. Ubiquitination is prevented by autoacetylation at Lys-327. Ubiquitinated following deacetylation by HDAC3, leading to cytoplasmic localization. Deubiquitinated by USP7 following interaction with ATF3, promoting its stabilization. (Microbial infection) In case of HIV-1 infection, interaction with the viral Tat protein leads to KAT5 polyubiquitination and targets it to degradation.

The protein localises to the nucleus. It is found in the chromosome. Its subcellular location is the cytoplasm. It localises to the centromere. The protein resides in the kinetochore. The protein localises to the cytoskeleton. It is found in the spindle pole. Its subcellular location is the nucleolus. It localises to the perinuclear region. The catalysed reaction is L-lysyl-[histone] + acetyl-CoA = N(6)-acetyl-L-lysyl-[histone] + CoA + H(+). The enzyme catalyses L-lysyl-[protein] + acetyl-CoA = N(6)-acetyl-L-lysyl-[protein] + CoA + H(+). It catalyses the reaction (2E)-butenoyl-CoA + L-lysyl-[protein] = N(6)-(2E)-butenoyl-L-lysyl-[protein] + CoA + H(+). It carries out the reaction 2-hydroxyisobutanoyl-CoA + L-lysyl-[protein] = N(6)-(2-hydroxyisobutanoyl)-L-lysyl-[protein] + CoA + H(+). The catalysed reaction is (S)-lactoyl-CoA + L-lysyl-[protein] = N(6)-[(S)-lactoyl]-L-lysyl-[protein] + CoA + H(+). With respect to regulation, acyltransferase and acetyltransferase activities are activated by phosphorylation and autoacetylation. Autoacetylation activates the histone acetyltransferase activity. Its function is as follows. Catalytic subunit of the NuA4 histone acetyltransferase complex, a multiprotein complex involved in transcriptional activation of select genes principally by acetylation of nucleosomal histones H2A and H4. Histone acetylation alters nucleosome-DNA interactions and promotes interaction of the modified histones with other proteins which positively regulate transcription. The NuA4 histone acetyltransferase complex is required for the activation of transcriptional programs associated with proto-oncogene mediated growth induction, tumor suppressor mediated growth arrest and replicative senescence, apoptosis, and DNA repair. The NuA4 complex plays a direct role in repair of DNA double-strand breaks (DSBs) by promoting homologous recombination (HR): the complex inhibits TP53BP1 binding to chromatin via MBTD1, which recognizes and binds histone H4 trimethylated at 'Lys-20' (H4K20me), and KAT5 that catalyzes acetylation of 'Lys-15' of histone H2A (H2AK15ac), thereby blocking the ubiquitination mark required for TP53BP1 localization at DNA breaks. Also involved in DSB repair by mediating acetylation of 'Lys-5' of histone H2AX (H2AXK5ac), promoting NBN/NBS1 assembly at the sites of DNA damage. The NuA4 complex plays a key role in hematopoietic stem cell maintenance and is required to maintain acetylated H2A.Z/H2AZ1 at MYC target genes. The NuA4 complex is also required for spermatid development by promoting acetylation of histones: histone hyperacetylation is required for histone replacement during the transition from round to elongating spermatids. Component of a SWR1-like complex that specifically mediates the removal of histone H2A.Z/H2AZ1 from the nucleosome. Also acetylates non-histone proteins, such as BMAL1, ATM, AURKB, CHKA, CGAS, ERCC4/XPF, LPIN1, TP53/p53, NDC80/HEC1, NR1D2, RAN, SOX4, FOXP3, SQSTM1, ULK1 and RUBCNL/Pacer. Directly acetylates and activates ATM. Promotes nucleotide excision repair (NER) by mediating acetylation of ERCC4/XPF, thereby promoting formation of the ERCC4-ERCC1 complex. Relieves NR1D2-mediated inhibition of APOC3 expression by acetylating NR1D2. Acts as a regulator of regulatory T-cells (Treg) by catalyzing FOXP3 acetylation, thereby promoting FOXP3 transcriptional repressor activity. Involved in skeletal myoblast differentiation by mediating acetylation of SOX4. Catalyzes acetylation of APBB1/FE65, increasing its transcription activator activity. Promotes transcription elongation during the activation phase of the circadian cycle by catalyzing acetylation of BMAL1, promoting elongation of circadian transcripts. Together with GSK3 (GSK3A or GSK3B), acts as a regulator of autophagy: phosphorylated at Ser-86 by GSK3 under starvation conditions, leading to activate acetyltransferase activity and promote acetylation of key autophagy regulators, such as ULK1 and RUBCNL/Pacer. Acts as a regulator of the cGAS-STING innate antiviral response by catalyzing acetylation the N-terminus of CGAS, thereby promoting CGAS DNA-binding and activation. Also regulates lipid metabolism by mediating acetylation of CHKA or LPIN1. Promotes lipolysis of lipid droplets following glucose deprivation by mediating acetylation of isoform 1 of CHKA, thereby promoting monomerization of CHKA and its conversion into a tyrosine-protein kinase. Acts as a regulator of fatty-acid-induced triacylglycerol synthesis by catalyzing acetylation of LPIN1, thereby promoting the synthesis of diacylglycerol. In addition to protein acetyltransferase, can use different acyl-CoA substrates, such as (2E)-butenoyl-CoA (crotonyl-CoA), S-lactoyl-CoA (lactyl-CoA) and 2-hydroxyisobutanoyl-CoA (2-hydroxyisobutyryl-CoA), and is able to mediate protein crotonylation, lactylation and 2-hydroxyisobutyrylation, respectively. Acts as a key regulator of chromosome segregation and kinetochore-microtubule attachment during mitosis by mediating acetylation or crotonylation of target proteins. Catalyzes acetylation of AURKB at kinetochores, increasing AURKB activity and promoting accurate chromosome segregation in mitosis. Acetylates RAN during mitosis, promoting microtubule assembly at mitotic chromosomes. Acetylates NDC80/HEC1 during mitosis, promoting robust kinetochore-microtubule attachment. Catalyzes crotonylation of MAPRE1/EB1, thereby ensuring accurate spindle positioning in mitosis. Catalyzes lactylation of NBN/NBS1 in response to DNA damage, thereby promoting DNA double-strand breaks (DSBs) via homologous recombination (HR). Functionally, (Microbial infection) Catalyzes the acetylation of flavivirus NS3 protein to modulate their RNA-binding and -unwinding activities leading to facilitate viral replication. This Homo sapiens (Human) protein is Histone acetyltransferase KAT5.